Reading from the N-terminus, the 178-residue chain is Large ribosomal subunit protein uL6 (178 aa).

It belongs to the universal ribosomal protein uL6 family. As to quaternary structure, part of the 50S ribosomal subunit.

In terms of biological role, this protein binds to the 23S rRNA, and is important in its secondary structure. It is located near the subunit interface in the base of the L7/L12 stalk, and near the tRNA binding site of the peptidyltransferase center. This is Large ribosomal subunit protein uL6 from Helicobacter pylori (strain Shi470).